The sequence spans 74 residues: UPF0352 protein PM1884 (74 aa).

This sequence belongs to the UPF0352 family.

In Pasteurella multocida (strain Pm70), this protein is UPF0352 protein PM1884.